The following is a 42-amino-acid chain: Photosystem I reaction center subunit IX (42 aa).

A helical transmembrane segment spans residues 8-28 (YLSTIPVVGAIWLTFTAGFII).

This sequence belongs to the PsaJ family.

Its subcellular location is the plastid. The protein localises to the chloroplast thylakoid membrane. In terms of biological role, may help in the organization of the PsaE and PsaF subunits. In Gracilaria tenuistipitata var. liui (Red alga), this protein is Photosystem I reaction center subunit IX.